The following is a 599-amino-acid chain: Dehydrogenase eriK (599 aa).

The signal sequence occupies residues 1-20; the sequence is MAFLKARLAALLSVAVSCSA. FAD-binding positions include 43–44 and 64–65; these read TA and EG. N93 carries N-linked (GlcNAc...) asparagine glycosylation. FAD is bound at residue 122–125; sequence NGMY. N-linked (GlcNAc...) asparagine glycosylation is found at N169, N191, N234, N260, N284, N319, N339, N353, N365, N370, N398, N456, and N518. Residues A569 and 580 to 581 each bind FAD; that span reads TQ.

Belongs to the GMC oxidoreductase family. As to quaternary structure, homodimer. It depends on FAD as a cofactor.

In terms of biological role, dehydrogenase; part of the gene cluster that mediates the biosynthesis of erinacines, cyathane-xylosides that show unique biological activities, including leishmanicidal activity, stimulating activity for nerve growth-factor synthesis, and agonistic activity toward the kappa opioid receptor. The role of the dehydrogenase eriK within the pathway has still to be determined. The first step of the erinacines biosynthesis pathway is catalyzed by the geranylgeranyl diphosphate (GGPP) synthase eriE via conversion of farnesyl pyrophosphate and isopentyl pyrophosphate into geranylgeranyl pyrophosphate (GGPP). GGPP is then substrate of the diterpene cyclase eriG for the production of cyatha-3,12-diene. The cytochrome P450 monooxygenase eriI then hydroxylates cyatha-3,12-diene at C-14 of the seven-membered ring to produce erinacol, which is further hydroxylated at C-15 by the cytochrome P450 monooxygenase eriC to yield cyathadiol. The cytochrome P450 monooxygenase eriA then catalyzes C-11 hydroxylation in the presence of the short chain dehydrogenase/reductase (SDR) eriH, which leads to the production of cyathatriol. The acetyltransferase eriL converts cyathatriol into 11-O-acetyl-cyathatriol. The SDR eriH catalyzes further oxidation of 11-O-acetyl-cyathatriol into 1-O-acetylcyathin A3. Finally, the glycosyl transferase eriJ tranfers xylose from UDP-xylose onto C-14 of 11-O-acetyl-cyathatriol to form eracine Q. EriJ is also able to convert 11-O-acetyl-cyathatriol to eracine Q2 by using UDP-D-glucose as cosubstrate, but at a lower rate. In Hericium erinaceus (Lion's mane mushroom), this protein is Dehydrogenase eriK.